Consider the following 304-residue polypeptide: MVFLSSVETDQRKMSAGNHSSVTEFILAGLSEQPELQLRLFLLFLGIYVVTVVGNLSMITLIGLSSHLHTPMYYFLSGLSFIDLCHSTIITPKMLVNFVTEKNIISYPECMTQLYFFLIFAIAECHMLAVTAYDRYVAICSPLLYNVIMSYHHCFWLTVGVYVLGILGSTIHTGFMLRLFLCKTNVINHYFCDLFPLLGLSCSSTYINELLVLVLSAFNILTPALTILASYIFIIASILRIRSTEGRSKAFSTCSSHILAVAVFFGSAAFMYLQPSSVSSMDQRKVSSVFYTTIVPMLNPQSIA.

Residues 1-41 (MVFLSSVETDQRKMSAGNHSSVTEFILAGLSEQPELQLRLF) are Extracellular-facing. N18 is a glycosylation site (N-linked (GlcNAc...) asparagine). The helical transmembrane segment at 42 to 62 (LLFLGIYVVTVVGNLSMITLI) threads the bilayer. Residues 63 to 69 (GLSSHLH) lie on the Cytoplasmic side of the membrane. The helical transmembrane segment at 70-90 (TPMYYFLSGLSFIDLCHSTII) threads the bilayer. At 91–110 (TPKMLVNFVTEKNIISYPEC) the chain is on the extracellular side. An intrachain disulfide couples C110 to C192. Residues 111-130 (MTQLYFFLIFAIAECHMLAV) traverse the membrane as a helical segment. Over 131 to 154 (TAYDRYVAICSPLLYNVIMSYHHC) the chain is Cytoplasmic. Residues 155–175 (FWLTVGVYVLGILGSTIHTGF) form a helical membrane-spanning segment. Topologically, residues 176–193 (MLRLFLCKTNVINHYFCD) are extracellular. A helical membrane pass occupies residues 194–214 (LFPLLGLSCSSTYINELLVLV). The Cytoplasmic segment spans residues 215-217 (LSA). The chain crosses the membrane as a helical span at residues 218–238 (FNILTPALTILASYIFIIASI). Residues 239–257 (LRIRSTEGRSKAFSTCSSH) are Extracellular-facing. Residues 258-278 (ILAVAVFFGSAAFMYLQPSSV) traverse the membrane as a helical segment. The Cytoplasmic segment spans residues 279-304 (SSMDQRKVSSVFYTTIVPMLNPQSIA).

The protein belongs to the G-protein coupled receptor 1 family.

The protein localises to the cell membrane. Odorant receptor. This chain is Olfactory receptor 8G2, found in Homo sapiens (Human).